Reading from the N-terminus, the 295-residue chain is Probable endonuclease 4 (295 aa).

Histidine 78, histidine 118, glutamate 154, aspartate 188, histidine 191, histidine 225, aspartate 238, histidine 240, and glutamate 270 together coordinate Zn(2+).

This sequence belongs to the AP endonuclease 2 family. Requires Zn(2+) as cofactor.

It catalyses the reaction Endonucleolytic cleavage to 5'-phosphooligonucleotide end-products.. Functionally, endonuclease IV plays a role in DNA repair. It cleaves phosphodiester bonds at apurinic or apyrimidinic (AP) sites, generating a 3'-hydroxyl group and a 5'-terminal sugar phosphate. The protein is Probable endonuclease 4 of Vibrio parahaemolyticus serotype O3:K6 (strain RIMD 2210633).